Reading from the N-terminus, the 180-residue chain is Shikimate kinase (180 aa).

Position 19–24 (19–24 (GAGKTT)) interacts with ATP. Thr23 is a Mg(2+) binding site. Substrate contacts are provided by Asp41, Arg65, and Gly87. Residue Arg125 coordinates ATP. Arg144 is a substrate binding site.

Belongs to the shikimate kinase family. Monomer. It depends on Mg(2+) as a cofactor.

The protein resides in the cytoplasm. The catalysed reaction is shikimate + ATP = 3-phosphoshikimate + ADP + H(+). It functions in the pathway metabolic intermediate biosynthesis; chorismate biosynthesis; chorismate from D-erythrose 4-phosphate and phosphoenolpyruvate: step 5/7. Catalyzes the specific phosphorylation of the 3-hydroxyl group of shikimic acid using ATP as a cosubstrate. This chain is Shikimate kinase, found in Acinetobacter baylyi (strain ATCC 33305 / BD413 / ADP1).